A 351-amino-acid polypeptide reads, in one-letter code: Protein RecA (351 aa).

68 to 75 is a binding site for ATP; that stretch reads GPESSGKT.

Belongs to the RecA family.

It is found in the cytoplasm. Its function is as follows. Can catalyze the hydrolysis of ATP in the presence of single-stranded DNA, the ATP-dependent uptake of single-stranded DNA by duplex DNA, and the ATP-dependent hybridization of homologous single-stranded DNAs. It interacts with LexA causing its activation and leading to its autocatalytic cleavage. This chain is Protein RecA, found in Chloroflexus aurantiacus (strain ATCC 29364 / DSM 637 / Y-400-fl).